Here is a 199-residue protein sequence, read N- to C-terminus: Shikimate kinase (199 aa).

32-37 (GSGKTS) contributes to the ATP binding site. Position 36 (T36) interacts with Mg(2+). Positions 54, 78, and 100 each coordinate substrate. R138 lines the ATP pocket. Substrate is bound at residue R157.

This sequence belongs to the shikimate kinase family. Monomer. Requires Mg(2+) as cofactor.

It localises to the cytoplasm. It catalyses the reaction shikimate + ATP = 3-phosphoshikimate + ADP + H(+). It participates in metabolic intermediate biosynthesis; chorismate biosynthesis; chorismate from D-erythrose 4-phosphate and phosphoenolpyruvate: step 5/7. Its function is as follows. Catalyzes the specific phosphorylation of the 3-hydroxyl group of shikimic acid using ATP as a cosubstrate. The sequence is that of Shikimate kinase from Synechococcus sp. (strain CC9605).